Here is a 591-residue protein sequence, read N- to C-terminus: Aspartate--tRNA(Asp/Asn) ligase (591 aa).

Glu176 is an L-aspartate binding site. The interval 200–203 is aspartate; that stretch reads QLFK. Arg222 serves as a coordination point for L-aspartate. ATP is bound by residues 222 to 224 and Gln231; that span reads RDE. His450 provides a ligand contact to L-aspartate. ATP is bound at residue Glu484. Arg491 serves as a coordination point for L-aspartate. 536-539 contacts ATP; sequence GLDR.

It belongs to the class-II aminoacyl-tRNA synthetase family. Type 1 subfamily. As to quaternary structure, homodimer.

It is found in the cytoplasm. It catalyses the reaction tRNA(Asx) + L-aspartate + ATP = L-aspartyl-tRNA(Asx) + AMP + diphosphate. In terms of biological role, aspartyl-tRNA synthetase with relaxed tRNA specificity since it is able to aspartylate not only its cognate tRNA(Asp) but also tRNA(Asn). Reaction proceeds in two steps: L-aspartate is first activated by ATP to form Asp-AMP and then transferred to the acceptor end of tRNA(Asp/Asn). The polypeptide is Aspartate--tRNA(Asp/Asn) ligase (Bacillus mycoides (strain KBAB4) (Bacillus weihenstephanensis)).